A 435-amino-acid polypeptide reads, in one-letter code: D-amino acid dehydrogenase (435 aa).

Residue 3–17 (VLILGSGVIGTTSAW) participates in FAD binding.

It belongs to the DadA oxidoreductase family. The cofactor is FAD.

The catalysed reaction is a D-alpha-amino acid + A + H2O = a 2-oxocarboxylate + AH2 + NH4(+). Its pathway is amino-acid degradation; D-alanine degradation; NH(3) and pyruvate from D-alanine: step 1/1. Functionally, oxidative deamination of D-amino acids. The sequence is that of D-amino acid dehydrogenase from Xylella fastidiosa (strain M12).